A 377-amino-acid chain; its full sequence is Dihydroorotate dehydrogenase (quinone) (377 aa).

FMN is bound by residues 78–82 and Ala102; that span reads AGCDK. Lys82 provides a ligand contact to substrate. 127–130 contributes to the substrate binding site; sequence NRLG. FMN contacts are provided by Asn159 and Asn192. Asn192 lines the substrate pocket. Ser195 serves as the catalytic Nucleophile. Asn197 serves as a coordination point for substrate. FMN-binding residues include Lys230 and Thr258. 259 to 260 contacts substrate; sequence NT. FMN-binding positions include Gly288, Gly317, and 338-339; that span reads YT.

Belongs to the dihydroorotate dehydrogenase family. Type 2 subfamily. Monomer. The cofactor is FMN.

It localises to the cell membrane. The enzyme catalyses (S)-dihydroorotate + a quinone = orotate + a quinol. It participates in pyrimidine metabolism; UMP biosynthesis via de novo pathway; orotate from (S)-dihydroorotate (quinone route): step 1/1. Its function is as follows. Catalyzes the conversion of dihydroorotate to orotate with quinone as electron acceptor. This chain is Dihydroorotate dehydrogenase (quinone), found in Rippkaea orientalis (strain PCC 8801 / RF-1) (Cyanothece sp. (strain PCC 8801)).